Here is a 129-residue protein sequence, read N- to C-terminus: Small ribosomal subunit protein uS11 (129 aa).

The protein belongs to the universal ribosomal protein uS11 family. In terms of assembly, part of the 30S ribosomal subunit. Interacts with proteins S7 and S18. Binds to IF-3.

Located on the platform of the 30S subunit, it bridges several disparate RNA helices of the 16S rRNA. Forms part of the Shine-Dalgarno cleft in the 70S ribosome. The protein is Small ribosomal subunit protein uS11 of Methylorubrum populi (strain ATCC BAA-705 / NCIMB 13946 / BJ001) (Methylobacterium populi).